A 233-amino-acid polypeptide reads, in one-letter code: Biosynthetic peptidoglycan transglycosylase (233 aa).

A helical transmembrane segment spans residues 17-37 (IVLAVLALVVLPYVLIFFYLL).

It belongs to the glycosyltransferase 51 family.

The protein resides in the cell inner membrane. It carries out the reaction [GlcNAc-(1-&gt;4)-Mur2Ac(oyl-L-Ala-gamma-D-Glu-L-Lys-D-Ala-D-Ala)](n)-di-trans,octa-cis-undecaprenyl diphosphate + beta-D-GlcNAc-(1-&gt;4)-Mur2Ac(oyl-L-Ala-gamma-D-Glu-L-Lys-D-Ala-D-Ala)-di-trans,octa-cis-undecaprenyl diphosphate = [GlcNAc-(1-&gt;4)-Mur2Ac(oyl-L-Ala-gamma-D-Glu-L-Lys-D-Ala-D-Ala)](n+1)-di-trans,octa-cis-undecaprenyl diphosphate + di-trans,octa-cis-undecaprenyl diphosphate + H(+). It participates in cell wall biogenesis; peptidoglycan biosynthesis. Its function is as follows. Peptidoglycan polymerase that catalyzes glycan chain elongation from lipid-linked precursors. The chain is Biosynthetic peptidoglycan transglycosylase from Rhizobium etli (strain ATCC 51251 / DSM 11541 / JCM 21823 / NBRC 15573 / CFN 42).